We begin with the raw amino-acid sequence, 330 residues long: G-protein coupled receptor 3 (330 aa).

Topologically, residues 1-42 (MMWGAGSPLAWLSAGSGNVNVSSVGPAEGPTGPAAPLPSPKA) are extracellular. Residue Asn20 is glycosylated (N-linked (GlcNAc...) asparagine). The chain crosses the membrane as a helical span at residues 43-62 (WDVVLCISGTLVSCENALVV). The Cytoplasmic portion of the chain corresponds to 63–74 (AIIVGTPAFRAP). Residues 75–98 (MFLLVGSLAVADLLAGLGLVLHFA) form a helical membrane-spanning segment. Residues 99–110 (AVFCIGSAEMSL) are Extracellular-facing. The chain crosses the membrane as a helical span at residues 111 to 132 (VLVGVLAMAFTASIGSLLAITV). Residues 133-153 (DRYLSLYNALTYYSETTVTRT) are Cytoplasmic-facing. The chain crosses the membrane as a helical span at residues 154–173 (YVMLALVWGGALGLGLLPVL). At 174-198 (AWNCLDGLTTCGVVYPLSKNHLVVL) the chain is on the extracellular side. A helical transmembrane segment spans residues 199–217 (AIAFFMVFGIMLQLYAQIC). Topologically, residues 218-245 (RIVCRHAQQIALQRHLLPASHYVATRKG) are cytoplasmic. A helical membrane pass occupies residues 246-272 (IATLAVVLGAFAACWLPFTVYCLLGDA). The Extracellular portion of the chain corresponds to 273–277 (HSPPL). Residues 278 to 299 (YTYLTLLPATYNSMINPIIYAF) traverse the membrane as a helical segment. The Cytoplasmic segment spans residues 300–330 (RNQDVQKVLWAVCCCCSSSKIPFRSRSPSDV). Cys313 carries S-palmitoyl cysteine lipidation. A phosphoserine mark is found at Ser324, Ser326, and Ser328.

It belongs to the G-protein coupled receptor 1 family. As to expression, expressed predominantly in the central nervous system, and at low levels in the lung, kidney, testis, ovary and eye. Highly expressed in regions of the brain implicated in the Alzheimer disease.

It is found in the cell membrane. Functionally, constitutively active G-protein coupled receptor that maintains high 3'-5'-cyclic adenosine monophosphate (cAMP) levels that a plays a role in serveral processes including meiotic arrest in oocytes or neuronal development via activation of numerous intracellular signaling pathways. Acts as an essential activator of thermogenic adipocytes and drives thermogenesis via its intrinsic G(s)-coupling activity without the requirement of a ligand. Has a potential role in modulating a number of brain functions, including behavioral responses to stress, amyloid-beta peptide generation in neurons. Stimulates neurite outgrowth in cerebellar granular neurons modulated via PKA, ERK, and most strongly PI3K-mediated signaling pathways. This chain is G-protein coupled receptor 3 (GPR3), found in Homo sapiens (Human).